We begin with the raw amino-acid sequence, 504 residues long: 2,3-bisphosphoglycerate-independent phosphoglycerate mutase (504 aa).

Residues Asp-13 and Ser-63 each coordinate Mn(2+). Ser-63 functions as the Phosphoserine intermediate in the catalytic mechanism. Residues His-124, 153–154 (RD), Arg-183, Arg-189, 254–257 (RADR), and Lys-330 contribute to the substrate site. Positions 397, 401, 438, 439, and 457 each coordinate Mn(2+).

This sequence belongs to the BPG-independent phosphoglycerate mutase family. In terms of assembly, monomer. Mn(2+) is required as a cofactor.

It catalyses the reaction (2R)-2-phosphoglycerate = (2R)-3-phosphoglycerate. Its pathway is carbohydrate degradation; glycolysis; pyruvate from D-glyceraldehyde 3-phosphate: step 3/5. In terms of biological role, catalyzes the interconversion of 2-phosphoglycerate and 3-phosphoglycerate. This chain is 2,3-bisphosphoglycerate-independent phosphoglycerate mutase, found in Rhodopseudomonas palustris (strain ATCC BAA-98 / CGA009).